Consider the following 121-residue polypeptide: UPF0738 protein BPUM_1088 (121 aa).

The protein belongs to the UPF0738 family.

The protein is UPF0738 protein BPUM_1088 of Bacillus pumilus (strain SAFR-032).